We begin with the raw amino-acid sequence, 24 residues long: Fraternine (24 aa).

A disulfide bridge connects residues Cys-11 and Cys-24. Cys-24 carries the cysteine amide modification.

As to expression, expressed by the venom gland.

Its subcellular location is the secreted. Functionally, wasp venom peptide that acts as a potent mast cell degranulating peptide without hemolytic activity. Shows neuroprotective effect, since it prevents the death of dopaminergic neurons of the brain substantia nigra region and recovers motor deficit in a 6-hydroxydopamine (6-OHDA)-induced murine model of Parkinson disease. The protein is Fraternine of Parachartergus fraternus (Artistic wasp).